The primary structure comprises 228 residues: PKHD-type hydroxylase XCV3086 (228 aa).

A Fe2OG dioxygenase domain is found at 78–180; it reads RIYPPLFNRY…RVACFFWTQS (103 aa). Residues His96, Asp98, and His161 each coordinate Fe cation. 2-oxoglutarate is bound at residue Arg171.

The cofactor is Fe(2+). It depends on L-ascorbate as a cofactor.

The protein is PKHD-type hydroxylase XCV3086 of Xanthomonas euvesicatoria pv. vesicatoria (strain 85-10) (Xanthomonas campestris pv. vesicatoria).